A 345-amino-acid polypeptide reads, in one-letter code: Phosphoribosylformylglycinamidine cyclo-ligase (345 aa).

Belongs to the AIR synthase family.

The protein localises to the cytoplasm. The enzyme catalyses 2-formamido-N(1)-(5-O-phospho-beta-D-ribosyl)acetamidine + ATP = 5-amino-1-(5-phospho-beta-D-ribosyl)imidazole + ADP + phosphate + H(+). Its pathway is purine metabolism; IMP biosynthesis via de novo pathway; 5-amino-1-(5-phospho-D-ribosyl)imidazole from N(2)-formyl-N(1)-(5-phospho-D-ribosyl)glycinamide: step 2/2. The sequence is that of Phosphoribosylformylglycinamidine cyclo-ligase from Actinobacillus succinogenes (strain ATCC 55618 / DSM 22257 / CCUG 43843 / 130Z).